The sequence spans 1051 residues: Lateral signaling target protein 2 homolog (1051 aa).

4 disordered regions span residues 305–440, 516–552, 566–703, and 837–968; these read PLGS…DEDL, GSNA…PSTS, HLPS…NASS, and IDLA…DGKA. The span at 319–358 shows a compositional bias: low complexity; it reads NNTSSSTSNNNNNNNNNSSSSSSSSSGSGSNTAKTSTSST. Positions 360 to 370 are enriched in basic and acidic residues; the sequence is KAVERLVDHRN. Polar residues predominate over residues 371-391; sequence NNSSTVAGATQPSTARSPSML. 2 stretches are compositionally biased toward low complexity: residues 392–401 and 409–428; these read SLSAGSTPTA and PSHS…NPPA. Polar residues predominate over residues 518 to 528; the sequence is NAATERQQQQQ. 2 stretches are compositionally biased toward low complexity: residues 533 to 549 and 568 to 582; these read LQPG…QDEP and PSSS…SSNQ. Residues Ser569 and Ser570 each carry the phosphoserine modification. Positions 583–596 are enriched in polar residues; sequence QTTIKTPNGNQSMP. Positions 597-606 are enriched in low complexity; sequence NSSSSSSNHN. Composition is skewed to basic residues over residues 607 to 637 and 650 to 672; these read NNRH…HPHH and HHHH…ARKR. A compositionally biased stretch (polar residues) spans 692 to 703; that stretch reads TPGSADTSNASS. Residues 840–852 show a composition bias toward low complexity; that stretch reads ASGNNNGNSNAAA. At Ser861 the chain carries Phosphoserine. Composition is skewed to low complexity over residues 879–924 and 937–960; these read QQQQ…SPIS and SSIG…MSPP. Residues 965 to 1025 form an FYVE-type zinc finger; that stretch reads DGKAPRCMSC…VCRECYVREV (61 aa). Residues Cys971, Cys974, Cys987, Cys990, Cys995, Cys998, Cys1017, and Cys1020 each contribute to the Zn(2+) site. Residues 1028 to 1051 are disordered; that stretch reads SRQAPAQPSQAHGQASRPQAASAS.

It belongs to the lst-2 family.

Negative regulator of epidermal growth factor receptor (EGFR) signaling. In Drosophila mojavensis (Fruit fly), this protein is Lateral signaling target protein 2 homolog.